The following is a 586-amino-acid chain: Asparagine synthetase [glutamine-hydrolyzing] 2 (586 aa).

Cysteine 2 acts as the For GATase activity in catalysis. Positions 2–185 constitute a Glutamine amidotransferase type-2 domain; that stretch reads CGILAVLGCS…PGHLYSSKEK (184 aa). L-glutamine-binding positions include 50 to 54, 75 to 77, and aspartate 98; these read RLAIV and NGE. The Asparagine synthetase domain occupies 193–516; the sequence is PPWFSEAIPS…PQNSARLSVP (324 aa). ATP-binding positions include leucine 231, valine 267, and 341–342; that span reads SG.

It catalyses the reaction L-aspartate + L-glutamine + ATP + H2O = L-asparagine + L-glutamate + AMP + diphosphate + H(+). It participates in amino-acid biosynthesis; L-asparagine biosynthesis; L-asparagine from L-aspartate (L-Gln route): step 1/1. The chain is Asparagine synthetase [glutamine-hydrolyzing] 2 (AS2) from Lotus japonicus (Lotus corniculatus var. japonicus).